The following is a 450-amino-acid chain: Putative gustatory receptor 28a (450 aa).

At 1–47 (MAFKLWERFSQADNVFQALRPLTFISLLGLAPFRLNLNPRKEVQTSK) the chain is on the cytoplasmic side. A helical transmembrane segment spans residues 48–68 (FSFFAGIVHFLFFVLCFGISV). The Extracellular portion of the chain corresponds to 69–87 (KEGDSIIGYFFQTNITRFS). N82 is a glycosylation site (N-linked (GlcNAc...) asparagine). The chain crosses the membrane as a helical span at residues 88–108 (DGTLRLTGILAMSTIFGFAMF). Topologically, residues 109 to 138 (KRQRLVSIIQNNIVVDEIFVRLGMKLDYRR) are cytoplasmic. The helical transmembrane segment at 139–159 (ILLSSFLISLGMLLFNVIYLC) threads the bilayer. Over 160-171 (VSYSLLVSATIS) the chain is Extracellular. The chain crosses the membrane as a helical span at residues 172 to 192 (PSFVTFTTFALPHINISLMVF). The Cytoplasmic segment spans residues 193 to 292 (KFLCTTDLAR…CQTIEEYFTY (100 aa)). A helical membrane pass occupies residues 293–313 (PLLGIIAISFLFILFDDFYIL). The Extracellular segment spans residues 314-329 (EAILNPKRLDVFEADE). The helical transmembrane segment at 330 to 350 (FFAFFLMQLIWYIVIIVLIVE) threads the bilayer. At 351-407 (GSSRTILHSSYTAAIVHKILNITDDPELRDRLFRLSLQLSHRKVLFTAAGLFRLDRT) the chain is on the cytoplasmic side. Residues 408–424 (LIFTITGAATCYLIILI) form a helical membrane-spanning segment. At 425-450 (QFRFTHHMDDTSSNSTNNLHSIHLGD) the chain is on the extracellular side. N438 carries an N-linked (GlcNAc...) asparagine glycan.

It belongs to the insect chemoreceptor superfamily. Gustatory receptor (GR) family. Gr2a subfamily. As to expression, in addition to expression in a large number of taste neurons, Gr28a is also expressed in a few nonchemosensory neurons, including the campaniform sensilla of the wing, leg stretch receptors, and multiple dendritic (MD) neurons in the abdomen. In larvea, is expressed in neurons of the terminal external chemosensory organ, the dorsal external chemosensory organ, as well as in the ventral and posterior pharyngeal sense organ.

It localises to the cell membrane. Functionally, probable gustatory receptor which mediates acceptance or avoidance behavior, depending on its substrates. Atypical expression also suggests nongustatory roles in the nervous system and tissues involved in proprioception, hygroreception, and other sensory modalities. It is also possible that it has chemosensory roles in the detection of internal ligands. In Drosophila melanogaster (Fruit fly), this protein is Putative gustatory receptor 28a (Gr28a).